A 186-amino-acid polypeptide reads, in one-letter code: Ribosome-recycling factor (186 aa).

This sequence belongs to the RRF family.

The protein localises to the cytoplasm. Its function is as follows. Responsible for the release of ribosomes from messenger RNA at the termination of protein biosynthesis. May increase the efficiency of translation by recycling ribosomes from one round of translation to another. This Pelodictyon phaeoclathratiforme (strain DSM 5477 / BU-1) protein is Ribosome-recycling factor.